Consider the following 157-residue polypeptide: Lipoprotein signal peptidase (157 aa).

3 helical membrane-spanning segments follow: residues 10-30 (LIFIVVFSLIFGTDQAIKYAI), 58-78 (FLEGGLKYLQILLILGLFIFL), and 84-104 (LFKNHAIEFGMVFGAGVSNVL). Active-site residues include Asp114 and Asp131. A helical membrane pass occupies residues 122-142 (FDFAIFNFADVMIDVGVGVLL).

The protein belongs to the peptidase A8 family.

The protein localises to the cell inner membrane. The enzyme catalyses Release of signal peptides from bacterial membrane prolipoproteins. Hydrolyzes -Xaa-Yaa-Zaa-|-(S,diacylglyceryl)Cys-, in which Xaa is hydrophobic (preferably Leu), and Yaa (Ala or Ser) and Zaa (Gly or Ala) have small, neutral side chains.. It functions in the pathway protein modification; lipoprotein biosynthesis (signal peptide cleavage). Functionally, this protein specifically catalyzes the removal of signal peptides from prolipoproteins. The sequence is that of Lipoprotein signal peptidase from Helicobacter pylori (strain Shi470).